A 201-amino-acid polypeptide reads, in one-letter code: MGSLDLAKAGAILVKNALSGEMVELKSLWKEQTTVLLFLRRFGCQICRWIAKDMGKLKESCDVHQIRLVGIGPEEVGLKEFLDGNFFNGELYIDDSKQSYKDLGFKRYSALSVIPAALGKKVRDIVTKANADGVQGNFSGDLLQSGGMLIVSKGGEKVLLHFIQDSPGDYVPLETIVQTLGITANVTESQRPQCNDDVCTR.

The protein belongs to the peroxiredoxin-like PRXL2 family. Prostamide/prostaglandin F synthase subfamily.

The protein localises to the cytoplasm. The protein resides in the cytosol. The enzyme catalyses prostaglandin H2 + [thioredoxin]-dithiol = prostaglandin F2alpha + [thioredoxin]-disulfide. It catalyses the reaction prostamide F2alpha + [thioredoxin]-disulfide = prostamide H2 + [thioredoxin]-dithiol. In terms of biological role, catalyzes the reduction of prostaglandin-ethanolamide H(2) (prostamide H(2)) to prostamide F(2alpha) with NADPH as proton donor. Also able to reduce prostaglandin H(2) to prostaglandin F(2alpha). This Xenopus laevis (African clawed frog) protein is Prostamide/prostaglandin F synthase (prxl2b).